The primary structure comprises 335 residues: Cathepsin B (335 aa).

Residues 1–17 (MWRLLATLSCLVLLTSA) form the signal peptide. Positions 18 to 79 (RESLHFQPLS…QRAAFAADMI (62 aa)) are cleaved as a propeptide — activation peptide. Cystine bridges form between Cys-93-Cys-122, Cys-105-Cys-150, Cys-141-Cys-207, Cys-142-Cys-146, Cys-179-Cys-211, and Cys-187-Cys-198. Residue Cys-108 is part of the active site. Asn-192 carries N-linked (GlcNAc...) asparagine glycosylation. Lys-220 carries the post-translational modification N6-acetyllysine. Residues Cys-227 and Cys-331 are joined by a disulfide bond. Catalysis depends on residues His-278 and Asn-298. Residues 333–335 (PHF) constitute a propeptide that is removed on maturation.

This sequence belongs to the peptidase C1 family. As to quaternary structure, dimer of a heavy chain and a light chain cross-linked by a disulfide bond. Interacts with SRPX2. Directly interacts with SHKBP1. As to expression, expressed in heart (at protein level).

The protein localises to the lysosome. Its subcellular location is the melanosome. It is found in the secreted. It localises to the extracellular space. The protein resides in the apical cell membrane. The enzyme catalyses Hydrolysis of proteins with broad specificity for peptide bonds. Preferentially cleaves -Arg-Arg-|-Xaa bonds in small molecule substrates (thus differing from cathepsin L). In addition to being an endopeptidase, shows peptidyl-dipeptidase activity, liberating C-terminal dipeptides.. Functionally, thiol protease which is believed to participate in intracellular degradation and turnover of proteins. Cleaves matrix extracellular phosphoglycoprotein MEPE. Involved in the solubilization of cross-linked TG/thyroglobulin in the thyroid follicle lumen. Has also been implicated in tumor invasion and metastasis. The chain is Cathepsin B (CTSB) from Sus scrofa (Pig).